Reading from the N-terminus, the 144-residue chain is Large ribosomal subunit protein uL15 (144 aa).

The interval 1 to 48 (MIKLESLQDPSPRKRRTKLLGRGPSSGHGKTSCRGHKGDGSRSGYKRR) is disordered.

This sequence belongs to the universal ribosomal protein uL15 family. Part of the 50S ribosomal subunit.

In terms of biological role, binds to the 23S rRNA. In Chlamydia abortus (strain DSM 27085 / S26/3) (Chlamydophila abortus), this protein is Large ribosomal subunit protein uL15.